A 200-amino-acid chain; its full sequence is ATP-dependent Clp protease proteolytic subunit (200 aa).

Catalysis depends on serine 104, which acts as the Nucleophile. Histidine 129 is a catalytic residue.

It belongs to the peptidase S14 family. In terms of assembly, fourteen ClpP subunits assemble into 2 heptameric rings which stack back to back to give a disk-like structure with a central cavity, resembling the structure of eukaryotic proteasomes.

It is found in the cytoplasm. The catalysed reaction is Hydrolysis of proteins to small peptides in the presence of ATP and magnesium. alpha-casein is the usual test substrate. In the absence of ATP, only oligopeptides shorter than five residues are hydrolyzed (such as succinyl-Leu-Tyr-|-NHMec, and Leu-Tyr-Leu-|-Tyr-Trp, in which cleavage of the -Tyr-|-Leu- and -Tyr-|-Trp bonds also occurs).. Functionally, cleaves peptides in various proteins in a process that requires ATP hydrolysis. Has a chymotrypsin-like activity. Plays a major role in the degradation of misfolded proteins. The sequence is that of ATP-dependent Clp protease proteolytic subunit from Rubrobacter xylanophilus (strain DSM 9941 / JCM 11954 / NBRC 16129 / PRD-1).